Here is a 222-residue protein sequence, read N- to C-terminus: UPF0502 protein XCV4380 (222 aa).

This sequence belongs to the UPF0502 family.

The protein is UPF0502 protein XCV4380 of Xanthomonas euvesicatoria pv. vesicatoria (strain 85-10) (Xanthomonas campestris pv. vesicatoria).